We begin with the raw amino-acid sequence, 121 residues long: Ribonuclease P protein component (121 aa).

It belongs to the RnpA family. Consists of a catalytic RNA component (M1 or rnpB) and a protein subunit.

It catalyses the reaction Endonucleolytic cleavage of RNA, removing 5'-extranucleotides from tRNA precursor.. Functionally, RNaseP catalyzes the removal of the 5'-leader sequence from pre-tRNA to produce the mature 5'-terminus. It can also cleave other RNA substrates such as 4.5S RNA. The protein component plays an auxiliary but essential role in vivo by binding to the 5'-leader sequence and broadening the substrate specificity of the ribozyme. In Chromobacterium violaceum (strain ATCC 12472 / DSM 30191 / JCM 1249 / CCUG 213 / NBRC 12614 / NCIMB 9131 / NCTC 9757 / MK), this protein is Ribonuclease P protein component.